The sequence spans 473 residues: Trigger factor (473 aa).

Residues 174 to 261 form the PPIase FKBP-type domain; the sequence is GDIAVVSFKG…LKDLKEKELP (88 aa). The segment at 442–473 is disordered; it reads ATKLTTKTTTKATTKKGVKTKSKPKVNKKEKN. Low complexity predominate over residues 444–453; sequence KLTTKTTTKA. Positions 454–467 are enriched in basic residues; the sequence is TTKKGVKTKSKPKV.

This sequence belongs to the FKBP-type PPIase family. Tig subfamily.

The protein resides in the cytoplasm. The enzyme catalyses [protein]-peptidylproline (omega=180) = [protein]-peptidylproline (omega=0). Its function is as follows. Involved in protein export. Acts as a chaperone by maintaining the newly synthesized protein in an open conformation. Functions as a peptidyl-prolyl cis-trans isomerase. This is Trigger factor from Prochlorococcus marinus subsp. pastoris (strain CCMP1986 / NIES-2087 / MED4).